Consider the following 98-residue polypeptide: R.appendiculatus Kunitz/BPTI-like protein (98 aa).

A signal peptide spans 1 to 23 (MASTLKLFMLLPVILLLLQEAYG). Intrachain disulfides connect Cys36–Cys51, Cys43–Cys83, Cys49–Cys96, and Cys74–Cys92.

Monomer. As to expression, expressed in salivary glands.

It localises to the secreted. Activates large conductance calcium-activated potassium channels (maxiK, KCNMA1/KCNMB), when tested at micromolar concentrations, suggesting a potential mechanism for regulating host blood supply during feeding. Shows no antiprotease activity, and does not prevent ADP-, PAF- or collagen-induced platelet aggregation. Has no effect on blood coagulation and does not inhibit the alternative or classical complement cascades. The protein is R.appendiculatus Kunitz/BPTI-like protein of Rhipicephalus appendiculatus (Brown ear tick).